The following is a 152-amino-acid chain: Transcriptional regulator MraZ (152 aa).

SpoVT-AbrB domains follow at residues 5-52 (TSAI…PLPE) and 81-124 (ASDC…HDTA).

The protein belongs to the MraZ family. Forms oligomers.

It localises to the cytoplasm. The protein localises to the nucleoid. The chain is Transcriptional regulator MraZ from Colwellia psychrerythraea (strain 34H / ATCC BAA-681) (Vibrio psychroerythus).